The chain runs to 261 residues: 3-methyl-2-oxobutanoate hydroxymethyltransferase (261 aa).

The Mg(2+) site is built by Asp-42 and Asp-81. 3-methyl-2-oxobutanoate is bound by residues Asp-42–Ser-43, Asp-81, and Lys-110. Glu-112 provides a ligand contact to Mg(2+). Residue Glu-179 is the Proton acceptor of the active site.

The protein belongs to the PanB family. Homodecamer; pentamer of dimers. It depends on Mg(2+) as a cofactor.

It is found in the cytoplasm. It catalyses the reaction 3-methyl-2-oxobutanoate + (6R)-5,10-methylene-5,6,7,8-tetrahydrofolate + H2O = 2-dehydropantoate + (6S)-5,6,7,8-tetrahydrofolate. It participates in cofactor biosynthesis; (R)-pantothenate biosynthesis; (R)-pantoate from 3-methyl-2-oxobutanoate: step 1/2. In terms of biological role, catalyzes the reversible reaction in which hydroxymethyl group from 5,10-methylenetetrahydrofolate is transferred onto alpha-ketoisovalerate to form ketopantoate. This chain is 3-methyl-2-oxobutanoate hydroxymethyltransferase, found in Thermus thermophilus (strain ATCC BAA-163 / DSM 7039 / HB27).